We begin with the raw amino-acid sequence, 50 residues long: PsaJ-like protein asl3190 (50 aa).

A helical membrane pass occupies residues 21-41; that stretch reads VLAVISISVAFSTWAIFNYIF.

The protein belongs to the PsaJ family.

It is found in the cellular thylakoid membrane. In Nostoc sp. (strain PCC 7120 / SAG 25.82 / UTEX 2576), this protein is PsaJ-like protein asl3190.